The sequence spans 331 residues: Cytosolic arginine sensor for mTORC1 subunit 1 (331 aa).

A Phosphoserine modification is found at Ser14. 2 consecutive ACT domains span residues 72–137 (AEAT…HTLA) and 259–320 (GELW…DILQ). L-arginine contacts are provided by residues 110–111 (SV), Gly273, 279–280 (IV), and 299–303 (TFNFD).

This sequence belongs to the GATS family. In terms of assembly, forms homodimers and heterodimers with CASTOR2. Interacts with the GATOR2 complex which is composed of MIOS, SEC13, SEH1L, WDR24 and WDR59; the interaction is negatively regulated by arginine. Interacts with TM4SF5; the interaction is positively regulated by leucine and is negatively regulated by arginine. Post-translationally, phosphorylation at Ser-14 by AKT1, promoting the interaction between CASTOR1 and RNF167. In terms of processing, ubiquitinated by RNF167 via 'Lys-29'-polyubiquitination, leading to its degradation, releasing the GATOR2 complex. Ubiquitination by RNF167 is promoted by phosphorylation at Ser-14 by AKT1.

The protein localises to the cytoplasm. Its subcellular location is the cytosol. Functionally, functions as an intracellular arginine sensor within the amino acid-sensing branch of the TORC1 signaling pathway. As a homodimer or a heterodimer with CASTOR2, binds and inhibits the GATOR subcomplex GATOR2 and thereby mTORC1. Binding of arginine to CASTOR1 allosterically disrupts the interaction of CASTOR1-containing dimers with GATOR2 which can in turn activate mTORC1 and the TORC1 signaling pathway. The protein is Cytosolic arginine sensor for mTORC1 subunit 1 of Mus musculus (Mouse).